Here is a 137-residue protein sequence, read N- to C-terminus: BolA-like protein 1 (137 aa).

At Ser-81 the chain carries Phosphoserine. Positions 114–137 are disordered; the sequence is WGENSQLDTSPPCLGGNKKTLGTP.

It belongs to the BolA/IbaG family. Interacts with GLRX5.

The protein resides in the mitochondrion. Functionally, acts as a mitochondrial iron-sulfur (Fe-S) cluster assembly factor that facilitates (Fe-S) cluster insertion into a subset of mitochondrial proteins. Probably acts together with the monothiol glutaredoxin GLRX5. May protect cells against oxidative stress. In Pongo abelii (Sumatran orangutan), this protein is BolA-like protein 1 (BOLA1).